The following is a 367-amino-acid chain: Voltage-gated potassium channel subunit beta-2 (367 aa).

Residues threonine 56, tryptophan 57, glutamine 63, and aspartate 85 each contribute to the NADP(+) site. The active-site Proton donor/acceptor is tyrosine 90. NADP(+) contacts are provided by asparagine 158, serine 188, arginine 189, glutamine 214, tryptophan 243, serine 244, proline 245, leucine 246, alanine 247, cysteine 248, lysine 254, tyrosine 262, arginine 264, glycine 323, serine 325, glutamine 329, glutamate 332, and asparagine 333.

Belongs to the shaker potassium channel beta subunit family. In terms of assembly, forms heteromultimeric complex with alpha subunits.

Its subcellular location is the cytoplasm. The protein resides in the membrane. It is found in the cell membrane. The protein localises to the cell projection. It localises to the axon. Its subcellular location is the synapse. The protein resides in the synaptosome. It is found in the cytoskeleton. Functionally, regulatory subunit of the voltage-gated potassium (Kv) Shaker channels composed of pore-forming and potassium-conducting alpha subunits and of regulatory beta subunits. The beta-2/KCNAB2 cytoplasmic subunit may promote potassium channel closure via a mechanism that does not involve physical obstruction of the channel pore. Enhances current amplitude of Kv1.1/KCNA1 and Kv2.2/KCNA2 channels. May display nicotinamide adenine dinucleotide phosphate (NADPH)-dependent aldoketoreductase activity by catalyzing the NADPH-dependent reduction of a wide range of aldehyde and ketone substrates. The binding of oxidized and reduced nucleotide may alter Kv channel gating and contribute to dynamic fine tuning of cell excitability. This Xenopus laevis (African clawed frog) protein is Voltage-gated potassium channel subunit beta-2 (kcnab2).